The following is a 664-amino-acid chain: Threonine--tRNA ligase (664 aa).

Residues 1 to 64 form the TGS domain; it reads MSELLKITLP…TADAQLALVT (64 aa). Positions 250-559 are catalytic; it reads DHRKLGNEMD…LIEHFAGRLP (310 aa). The Zn(2+) site is built by Cys-355, His-406, and His-536.

It belongs to the class-II aminoacyl-tRNA synthetase family. As to quaternary structure, homodimer. Zn(2+) serves as cofactor.

The protein resides in the cytoplasm. It carries out the reaction tRNA(Thr) + L-threonine + ATP = L-threonyl-tRNA(Thr) + AMP + diphosphate + H(+). In terms of biological role, catalyzes the attachment of threonine to tRNA(Thr) in a two-step reaction: L-threonine is first activated by ATP to form Thr-AMP and then transferred to the acceptor end of tRNA(Thr). Also edits incorrectly charged L-seryl-tRNA(Thr). This Novosphingobium aromaticivorans (strain ATCC 700278 / DSM 12444 / CCUG 56034 / CIP 105152 / NBRC 16084 / F199) protein is Threonine--tRNA ligase.